A 528-amino-acid polypeptide reads, in one-letter code: Peptide chain release factor 3 (528 aa).

The region spanning 10–278 is the tr-type G domain; that stretch reads DRRRTFGIIS…AFVEQAPVPR (269 aa). Residues 19 to 26, 87 to 91, and 141 to 144 contribute to the GTP site; these read SHPDAGKT, DTPGH, and NKLD.

The protein belongs to the TRAFAC class translation factor GTPase superfamily. Classic translation factor GTPase family. PrfC subfamily.

It is found in the cytoplasm. In terms of biological role, increases the formation of ribosomal termination complexes and stimulates activities of RF-1 and RF-2. It binds guanine nucleotides and has strong preference for UGA stop codons. It may interact directly with the ribosome. The stimulation of RF-1 and RF-2 is significantly reduced by GTP and GDP, but not by GMP. In Syntrophotalea carbinolica (strain DSM 2380 / NBRC 103641 / GraBd1) (Pelobacter carbinolicus), this protein is Peptide chain release factor 3.